Here is a 549-residue protein sequence, read N- to C-terminus: Probable glucomannan 4-beta-mannosyltransferase 4 (549 aa).

Residues Val35–Leu55 traverse the membrane as a helical segment. Asp151 is a catalytic residue. Substrate-binding residues include Asp210 and Asp212. Asp304 is a catalytic residue. Helical transmembrane passes span Val383–Val403, Val406–Ile426, Ile497–Val517, and Tyr523–Gly543.

Belongs to the glycosyltransferase 2 family. Plant cellulose synthase-like A subfamily.

Its subcellular location is the golgi apparatus membrane. The enzyme catalyses GDP-mannose + (glucomannan)n = GDP + (glucomannan)n+1.. Its function is as follows. Probable mannan synthase which consists of a 4-beta-mannosyltransferase activity on mannan using GDP-mannose. The beta-1,4-mannan product is the backbone for galactomannan synthesis by galactomannan galactosyltransferase. Galactomannan is a noncellulosic polysaccharides of plant cell wall. This is Probable glucomannan 4-beta-mannosyltransferase 4 from Oryza sativa subsp. japonica (Rice).